Consider the following 193-residue polypeptide: dTTP/UTP pyrophosphatase (193 aa).

Aspartate 77 serves as the catalytic Proton acceptor.

Belongs to the Maf family. YhdE subfamily. A divalent metal cation serves as cofactor.

The protein resides in the cytoplasm. The catalysed reaction is dTTP + H2O = dTMP + diphosphate + H(+). It carries out the reaction UTP + H2O = UMP + diphosphate + H(+). Functionally, nucleoside triphosphate pyrophosphatase that hydrolyzes dTTP and UTP. May have a dual role in cell division arrest and in preventing the incorporation of modified nucleotides into cellular nucleic acids. In Bacteroides fragilis (strain YCH46), this protein is dTTP/UTP pyrophosphatase.